The primary structure comprises 261 residues: Cytochrome c oxidase subunit 3 (261 aa).

At 1–15 the chain is on the mitochondrial matrix side; it reads MTHQTHAYHMVNPSP. Residues 16–34 traverse the membrane as a helical segment; that stretch reads WPLTGALSALLMTSGLIMW. At 35–40 the chain is on the mitochondrial intermembrane side; it reads FHFNSV. Residues 41–66 traverse the membrane as a helical segment; sequence ALLTLGLTTNMLTMYQWWRDVIREST. The Mitochondrial matrix portion of the chain corresponds to 67–72; the sequence is FQGHHT. The helical transmembrane segment at 73–105 threads the bilayer; that stretch reads PNVQKGLRYGMILFIISEVLFFTGFFWAFYHSS. At 106 to 128 the chain is on the mitochondrial intermembrane side; that stretch reads LAPTPELGGCWPPTGIHPLNPLE. The helical transmembrane segment at 129–152 threads the bilayer; the sequence is VPLLNTSVLLASGVSITWAHHSLM. Residues 153 to 155 lie on the Mitochondrial matrix side of the membrane; sequence EGN. Residues 156–183 form a helical membrane-spanning segment; it reads RNHMLQALFITIALGVYFTLLQASEYYE. Residues 184–190 lie on the Mitochondrial intermembrane side of the membrane; that stretch reads APFTISD. A helical transmembrane segment spans residues 191-223; the sequence is GVYGSTFFVATGFHGLHVIIGSTFLIVCFFRQL. The Mitochondrial matrix segment spans residues 224–232; sequence KFHFTSSHH. The helical transmembrane segment at 233–256 threads the bilayer; the sequence is FGFEAAAWYWHFVDVVWLFLYVSI. Over 257–261 the chain is Mitochondrial intermembrane; sequence YWWGS.

It belongs to the cytochrome c oxidase subunit 3 family. In terms of assembly, component of the cytochrome c oxidase (complex IV, CIV), a multisubunit enzyme composed of 14 subunits. The complex is composed of a catalytic core of 3 subunits MT-CO1, MT-CO2 and MT-CO3, encoded in the mitochondrial DNA, and 11 supernumerary subunits COX4I, COX5A, COX5B, COX6A, COX6B, COX6C, COX7A, COX7B, COX7C, COX8 and NDUFA4, which are encoded in the nuclear genome. The complex exists as a monomer or a dimer and forms supercomplexes (SCs) in the inner mitochondrial membrane with NADH-ubiquinone oxidoreductase (complex I, CI) and ubiquinol-cytochrome c oxidoreductase (cytochrome b-c1 complex, complex III, CIII), resulting in different assemblies (supercomplex SCI(1)III(2)IV(1) and megacomplex MCI(2)III(2)IV(2)).

It is found in the mitochondrion inner membrane. It carries out the reaction 4 Fe(II)-[cytochrome c] + O2 + 8 H(+)(in) = 4 Fe(III)-[cytochrome c] + 2 H2O + 4 H(+)(out). In terms of biological role, component of the cytochrome c oxidase, the last enzyme in the mitochondrial electron transport chain which drives oxidative phosphorylation. The respiratory chain contains 3 multisubunit complexes succinate dehydrogenase (complex II, CII), ubiquinol-cytochrome c oxidoreductase (cytochrome b-c1 complex, complex III, CIII) and cytochrome c oxidase (complex IV, CIV), that cooperate to transfer electrons derived from NADH and succinate to molecular oxygen, creating an electrochemical gradient over the inner membrane that drives transmembrane transport and the ATP synthase. Cytochrome c oxidase is the component of the respiratory chain that catalyzes the reduction of oxygen to water. Electrons originating from reduced cytochrome c in the intermembrane space (IMS) are transferred via the dinuclear copper A center (CU(A)) of subunit 2 and heme A of subunit 1 to the active site in subunit 1, a binuclear center (BNC) formed by heme A3 and copper B (CU(B)). The BNC reduces molecular oxygen to 2 water molecules using 4 electrons from cytochrome c in the IMS and 4 protons from the mitochondrial matrix. This chain is Cytochrome c oxidase subunit 3 (MT-CO3), found in Nanger dama (Dama gazelle).